Consider the following 110-residue polypeptide: Small ribosomal subunit protein bS16 (110 aa).

Positions 81-104 (VRPAEVLGKQKQEKERSAKKKDAA) are enriched in basic and acidic residues. Positions 81 to 110 (VRPAEVLGKQKQEKERSAKKKDAAASETSE) are disordered.

Belongs to the bacterial ribosomal protein bS16 family.

The chain is Small ribosomal subunit protein bS16 from Prochlorococcus marinus (strain NATL2A).